We begin with the raw amino-acid sequence, 134 residues long: Probable glycine cleavage system H protein (134 aa).

A Lipoyl-binding domain is found at Thr29–Lys110. Lys70 is subject to N6-lipoyllysine.

The protein belongs to the GcvH family. As to quaternary structure, the glycine cleavage system is composed of four proteins: P, T, L and H. It depends on (R)-lipoate as a cofactor.

In terms of biological role, the glycine cleavage system catalyzes the degradation of glycine. The H protein shuttles the methylamine group of glycine from the P protein to the T protein. The protein is Probable glycine cleavage system H protein of Pyrococcus furiosus (strain ATCC 43587 / DSM 3638 / JCM 8422 / Vc1).